The following is a 343-amino-acid chain: MIHNRKTQTVVITGASSNLGIAIGKRLIDEKKEDAHLTIVVTSRTLRNVRVAIKTLKAHAVAKEVGPEVDFDYLLFDLADMTSINGALVELKLRFSRIDTLIFNSNAANYIGINWPLAMWRFTTQFKSEIENPSCMIQAVGVKSDDGMGSAYQSNVFGPWYMVLELTEQLKNGGKVIWISSITSSEKYVDLEDIELIHNKEPYKGSKRLIDVAHNYYSPKLEEEHGIYSYLTDPGIFTSSSASEYLNIFSAFGMYLMFYFARLIGLTTMNIDPYKGANVPVWVTLSEDPSALKREYRLGSRTGRWGTEMMDATKLQYEGSEEVGAYIDKGVGEWREKLKDQIN.

NADP(+) contacts are provided by leucine 19 and threonine 42. Residues serine 180 and tyrosine 203 each act as proton donor in the active site. Positions 203, 207, and 239 each coordinate NADP(+). Lysine 207 acts as the Lowers pKa of active site Tyr in catalysis.

Belongs to the short-chain dehydrogenases/reductases (SDR) family. ERG27 subfamily.

It catalyses the reaction a 3beta-hydroxysteroid + NADP(+) = a 3-oxosteroid + NADPH + H(+). It participates in steroid biosynthesis; zymosterol biosynthesis; zymosterol from lanosterol: step 5/6. In terms of biological role, responsible for the reduction of the keto group on the C-3 of sterols. The sequence is that of 3-keto-steroid reductase (ERG27) from Yarrowia lipolytica (strain CLIB 122 / E 150) (Yeast).